Here is a 96-residue protein sequence, read N- to C-terminus: MSNIRPLHDRVVIRRVEEETKTAGGILLPGSAAEKPAQGEVIAVGNGQITENGVRALDVKAGDKVLFGTYAGTTVKVNGEEFLIMKESDILAVLEG.

The protein belongs to the GroES chaperonin family. As to quaternary structure, heptamer of 7 subunits arranged in a ring. Interacts with the chaperonin GroEL.

Its subcellular location is the cytoplasm. In terms of biological role, together with the chaperonin GroEL, plays an essential role in assisting protein folding. The GroEL-GroES system forms a nano-cage that allows encapsulation of the non-native substrate proteins and provides a physical environment optimized to promote and accelerate protein folding. GroES binds to the apical surface of the GroEL ring, thereby capping the opening of the GroEL channel. This Acinetobacter baylyi (strain ATCC 33305 / BD413 / ADP1) protein is Co-chaperonin GroES.